A 385-amino-acid polypeptide reads, in one-letter code: Protein pelota homolog (385 aa).

K162 participates in a covalent cross-link: Glycyl lysine isopeptide (Lys-Gly) (interchain with G-Cter in SUMO2). A phosphoserine mark is found at S374, S380, S381, and S382.

Belongs to the eukaryotic release factor 1 family. Pelota subfamily. As to quaternary structure, component of the Pelota-HBS1L complex, also named Dom34-Hbs1 complex, composed of PELO and HBS1L. Interacts with PINK1. Interacts with ABCE1. Interacts with CNOT4. A divalent metal cation serves as cofactor.

The protein resides in the cytoplasm. Functionally, component of the Pelota-HBS1L complex, a complex that recognizes stalled ribosomes and triggers the No-Go Decay (NGD) pathway. In the Pelota-HBS1L complex, PELO recognizes ribosomes stalled at the 3' end of an mRNA and engages stalled ribosomes by destabilizing mRNA in the mRNA channel. Following mRNA extraction from stalled ribosomes by the SKI complex, the Pelota-HBS1L complex promotes recruitment of ABCE1, which drives the disassembly of stalled ribosomes, followed by degradation of damaged mRNAs as part of the NGD pathway. As part of the PINK1-regulated signaling, upon mitochondrial damage is recruited to the ribosome/mRNA-ribonucleoprotein complex associated to mitochondrial outer membrane thereby enabling the recruitment of autophagy receptors and induction of mitophagy. The polypeptide is Protein pelota homolog (PELO) (Pongo abelii (Sumatran orangutan)).